The primary structure comprises 162 residues: Caveolin-2 (162 aa).

At 1-86 (MGLETEKADA…FEVSKYLIYK (86 aa)) the chain is on the cytoplasmic side. Y19 is subject to Phosphotyrosine; by SRC. Residues 19–40 (YSRHSGLGYPEPEKCAKSTQDR) form a disordered region. A phosphoserine mark is found at S20 and S23. Y27 carries the phosphotyrosine; by SRC modification. Positions 29–40 (EPEKCAKSTQDR) are enriched in basic and acidic residues. Position 36 is a phosphoserine (S36). The helical intramembrane region spans 87–107 (VLTVLLAIPLAFVAGILFATL). Over 108–162 (SCLHIWIVVPFVKTCLMVLPSVQTVWHSITDGFIAPLYKSMGLIFSSISLRLSPE) the chain is Cytoplasmic.

Belongs to the caveolin family. Monomer or homodimer. Interacts with CAV1; the interaction forms a stable heterooligomeric complex that is required for targeting to lipid rafts and for caveolae formation. Tyrosine phosphorylated forms do not form heterooligomers with the Tyr-19-phosphorylated form existing as a monomer or dimer, and the Tyr-27-form as a monomer only. Interacts (tyrosine phosphorylated form) with the SH2 domain-containing proteins, RASA1, NCK1 and SRC. Interacts (tyrosine phosphorylated form) with INSR, the interaction (Tyr-27-phosphorylated form) is increased on insulin stimulation. Interacts (Tyr-19 phosphorylated form) with MAPK1 (phosphorylated form); the interaction, promoted by insulin, leads to nuclear location and MAPK1 activation. Interacts with STAT3; the interaction is increased on insulin-induced tyrosine phosphorylation leading to STAT activation. In terms of processing, phosphorylated on serine and tyrosine residues. CAV1 promotes phosphorylation on Ser-23 which then targets the complex to the plasma membrane, lipid rafts and caveolae. Phosphorylation on Ser-36 appears to modulate mitosis in endothelial cells. Phosphorylation on both Tyr-19 and Tyr-27 is required for insulin-induced 'Ser-727' phosphorylation of STAT3 and its activation. Phosphorylation on Tyr-19 is required for insulin-induced phosphorylation of MAPK1 and DNA binding of STAT3. Tyrosine phosphorylation is induced by both EGF and insulin (By. similarity).

The protein resides in the nucleus. It is found in the cytoplasm. Its subcellular location is the golgi apparatus membrane. The protein localises to the cell membrane. It localises to the membrane. The protein resides in the caveola. In terms of biological role, may act as a scaffolding protein within caveolar membranes. Interacts directly with G-protein alpha subunits and can functionally regulate their activity. Acts as an accessory protein in conjunction with CAV1 in targeting to lipid rafts and driving caveolae formation. The Ser-36 phosphorylated form has a role in modulating mitosis in endothelial cells. Positive regulator of cellular mitogenesis of the MAPK signaling pathway. Required for the insulin-stimulated nuclear translocation and activation of MAPK1 and STAT3, and the subsequent regulation of cell cycle progression. This chain is Caveolin-2 (CAV2), found in Didelphis virginiana (North American opossum).